The primary structure comprises 425 residues: Serine--tRNA ligase (425 aa).

230-232 (TAE) serves as a coordination point for L-serine. 261-263 (RSE) provides a ligand contact to ATP. E284 is a binding site for L-serine. An ATP-binding site is contributed by 348 to 351 (EISS). S384 is a binding site for L-serine.

The protein belongs to the class-II aminoacyl-tRNA synthetase family. Type-1 seryl-tRNA synthetase subfamily. As to quaternary structure, homodimer. The tRNA molecule binds across the dimer.

The protein resides in the cytoplasm. The enzyme catalyses tRNA(Ser) + L-serine + ATP = L-seryl-tRNA(Ser) + AMP + diphosphate + H(+). It catalyses the reaction tRNA(Sec) + L-serine + ATP = L-seryl-tRNA(Sec) + AMP + diphosphate + H(+). It functions in the pathway aminoacyl-tRNA biosynthesis; selenocysteinyl-tRNA(Sec) biosynthesis; L-seryl-tRNA(Sec) from L-serine and tRNA(Sec): step 1/1. Functionally, catalyzes the attachment of serine to tRNA(Ser). Is also able to aminoacylate tRNA(Sec) with serine, to form the misacylated tRNA L-seryl-tRNA(Sec), which will be further converted into selenocysteinyl-tRNA(Sec). The sequence is that of Serine--tRNA ligase from Streptococcus thermophilus (strain ATCC BAA-491 / LMD-9).